The chain runs to 351 residues: MRKIIHVDMDCFFAAVEMRDNPALRDIPLAIGGSRERRGVISTANYPARKYGVRSAMPTAMALKLCPHLTLLPGRFDAYKEASAHIREIFSRYTSLIEPLSLDEAYLDVTHSPHCYGSATLMAKEIRQTIFDELQLTASAGIAPIKFLAKIASDLNKPNGQYVITPEEVPGFLRTLPLGKIPGVGKVTAAKLESLGLRTCEDVQKSDLAALLKRFGKFGRVLWERSQGIDDREISSDRQRKSVGVERTLAEDIHEWAECEAIVELLYPELERRLAAVQPDLRIARQGVKLKFNDFQLTTQEHVWPKLNKEDLLATARKTWEERRSGRGVRLVGLHVTLLDPQIERQLVLGL.

Residues 4–185 enclose the UmuC domain; it reads IIHVDMDCFF…LPLGKIPGVG (182 aa). Mg(2+) contacts are provided by aspartate 8 and aspartate 103. The active site involves glutamate 104.

Belongs to the DNA polymerase type-Y family. As to quaternary structure, monomer. Requires Mg(2+) as cofactor.

The protein resides in the cytoplasm. It carries out the reaction DNA(n) + a 2'-deoxyribonucleoside 5'-triphosphate = DNA(n+1) + diphosphate. In terms of biological role, poorly processive, error-prone DNA polymerase involved in untargeted mutagenesis. Copies undamaged DNA at stalled replication forks, which arise in vivo from mismatched or misaligned primer ends. These misaligned primers can be extended by PolIV. Exhibits no 3'-5' exonuclease (proofreading) activity. May be involved in translesional synthesis, in conjunction with the beta clamp from PolIII. This Cronobacter sakazakii (strain ATCC BAA-894) (Enterobacter sakazakii) protein is DNA polymerase IV.